The primary structure comprises 505 residues: ATP synthase subunit alpha (505 aa).

170–177 (GDRQTGKT) is an ATP binding site.

Belongs to the ATPase alpha/beta chains family. As to quaternary structure, F-type ATPases have 2 components, CF(1) - the catalytic core - and CF(0) - the membrane proton channel. CF(1) has five subunits: alpha(3), beta(3), gamma(1), delta(1), epsilon(1). CF(0) has four main subunits: a(1), b(1), b'(1) and c(9-12).

The protein resides in the cellular thylakoid membrane. It carries out the reaction ATP + H2O + 4 H(+)(in) = ADP + phosphate + 5 H(+)(out). Produces ATP from ADP in the presence of a proton gradient across the membrane. The alpha chain is a regulatory subunit. The protein is ATP synthase subunit alpha of Synechococcus sp. (strain ATCC 27144 / PCC 6301 / SAUG 1402/1) (Anacystis nidulans).